The chain runs to 348 residues: N-formyl peptide receptor 2 (348 aa).

Asn-1 carries N-linked (GlcNAc...) asparagine glycosylation. The Extracellular segment spans residues 1–24; the sequence is NFSTPLSEYEEVSYESAGYTVLQI. The helical transmembrane segment at 25–47 threads the bilayer; it reads LPLVVLGVTFVLGVLGNGLVIWV. At 48 to 58 the chain is on the cytoplasmic side; sequence AGFRMTRTVTT. Residues 59 to 80 form a helical membrane-spanning segment; the sequence is ICYLNLALADFSFTATLPFLIV. The Extracellular portion of the chain corresponds to 81 to 97; that stretch reads SMAMGEKWPFGWFLCKL. A disulfide bridge links Cys-95 with Cys-173. Residues 98–118 form a helical membrane-spanning segment; sequence IHIVVDINLFGSVFLIGFIAL. The Cytoplasmic portion of the chain corresponds to 119 to 137; sequence DRCICVLHPVWAQNHRTVS. Residues 138–159 traverse the membrane as a helical segment; that stretch reads LAMKVIVGPWILALVLTLPVFL. Over 160–202 the chain is Extracellular; that stretch reads FLTTVTIPNGDTYCTFNFASWGGTPEKRLKVAITMLTARGIIR. The chain crosses the membrane as a helical span at residues 203–223; sequence FVIGFSMPMSIVATCYGLIAA. The Cytoplasmic segment spans residues 224-239; the sequence is KIHKKGMIKSSRPLRV. Residues 240-263 traverse the membrane as a helical segment; it reads LTAVVASFFICWFPFQLVALLSTV. Topologically, residues 264 to 283 are extracellular; it reads WLKEILVDGKYKIINILVNP. The helical transmembrane segment at 284-303 threads the bilayer; it reads TSSLAFFNSCLNPMLYVFVG. Residues 304–348 are Cytoplasmic-facing; that stretch reads QDFRERLIHSLPTSLERALSEDSAPTNDTAASCASPPAETELQAM. The tract at residues 322–348 is disordered; sequence LSEDSAPTNDTAASCASPPAETELQAM. Residues 326 to 335 are compositionally biased toward polar residues; that stretch reads SAPTNDTAAS.

Belongs to the G-protein coupled receptor 1 family. As to quaternary structure, interacts with APP; the interaction takes place at the cell surface and the complex is then rapidly internalized.

The protein resides in the cell membrane. Its function is as follows. Low affinity receptor for N-formyl-methionyl peptides, which are powerful neutrophil chemotactic factors. Binding of FMLP to the receptor causes activation of neutrophils. This response is mediated via a G-protein that activates a phosphatidylinositol-calcium second messenger system. Receptor for the chemokine-like protein FAM19A5, mediating FAM19A5-stimulated macrophage chemotaxis and the inhibitory effect on TNFSF11/RANKL-induced osteoclast differentiation. The sequence is that of N-formyl peptide receptor 2 (FPR2) from Macaca mulatta (Rhesus macaque).